The following is a 641-amino-acid chain: Sodium-dependent nutrient amino acid transporter 1 (641 aa).

Positions 1–21 are enriched in polar residues; it reads MELKNIEQQPQLQNGNGTATE. The interval 1 to 37 is disordered; the sequence is MELKNIEQQPQLQNGNGTATENNEKGEQKPTEGGERT. The Cytoplasmic segment spans residues 1–38; that stretch reads MELKNIEQQPQLQNGNGTATENNEKGEQKPTEGGERTN. Positions 22–35 are enriched in basic and acidic residues; the sequence is NNEKGEQKPTEGGE. The next 3 helical transmembrane spans lie at 39–59, 72–92, and 125–145; these read WGNG…LGNV, GAFL…MYYL, and TVCI…YLFV. 3 N-linked (GlcNAc...) asparagine glycosylation sites follow: Asn181, Asn190, and Asn198. The next 9 helical transmembrane spans lie at 229–249, 258–278, 307–327, 341–361, 401–421, 441–461, 474–494, 516–536, and 552–572; these read PDWK…LVIM, AAYF…GRAV, AVVQ…MFAS, IVTT…FAIL, LFSV…IVAL, VALV…TPGG, TYVV…IYGL, CWSF…MATI, and IAGW…GIWY.

The protein belongs to the sodium:neurotransmitter symporter (SNF) (TC 2.A.22) family.

It localises to the membrane. Functionally, unusual broad substrate spectrum amino acid:sodium cotransporter that promotes absorption of the D isomers of essential amino acids. Neutral amino acids are the preferred substrates, especially methionine and phenylalanine. This is Sodium-dependent nutrient amino acid transporter 1 from Drosophila willistoni (Fruit fly).